We begin with the raw amino-acid sequence, 303 residues long: Caspase-7 (303 aa).

Positions 1-21 (MADDQGCIEEQGVEDSANEDS) are enriched in acidic residues. A disordered region spans residues 1–30 (MADDQGCIEEQGVEDSANEDSVDAKPDRSS). At A2 the chain carries N-acetylalanine. The propeptide at 2–23 (ADDQGCIEEQGVEDSANEDSVD) is N-terminally processed. At S30 the chain carries Phosphoserine; by PAK2. S37 carries the post-translational modification Phosphoserine. The interval 38–41 (KKKK) is exosite. Residues 76–87 (KNFDKVTGMGVR) are loop L1. The active site involves H144. T173 is subject to Phosphothreonine; by PAK2. C186 is a catalytic residue. Positions 187–196 (RGTELDDGIQ) are loop L2. A propeptide spanning residues 199-206 (SGPINDTD) is cleaved from the precursor. Positions 226–238 (VPGYYSWRSPGRG) are loop L3. The residue at position 233 (R233) is a (Microbial infection) ADP-riboxanated arginine. Phosphoserine; by PAK2 is present on S239. Residues 274-288 (ESQSDDPHFHEKKQI) form a loop L4 region.

The protein belongs to the peptidase C14A family. As to quaternary structure, heterotetramer that consists of two anti-parallel arranged heterodimers, each one formed by a 20 kDa (p20) and a 11 kDa (p11) subunit. Interacts with XIAP (via its second BIR domain); inhibiting CASP7 activity. Interacts with BIRC6/bruce. Interacts with ATXN3 (short isoform 1). Interacts with HSPA5. Post-translationally, cleavage by different proteases, such as granzyme B (GZMB), caspase-1 (CASP1), caspase-8 (CASP8), caspase-9 (CASP9) or caspase-10 (CASP10) generate the two active subunits. Its involvement in different programmed cell death processes is probably specified by the protease that activates CASP7. Cleaved and activated by initiator caspases (CASP8, CASP9 and/or CASP10), leading to execution phase of apoptosis. Cleavage and maturation by GZMB regulates granzyme-mediated programmed cell death. Cleaved and activated by CASP1 in response to bacterial infection. Propeptide domains can also be cleaved efficiently by CASP3. Active heterodimers between the small subunit of caspase-7 and the large subunit of CASP3, and vice versa, also occur. Also cleaved at the N-terminus at alternative sites by CAPN1, leading to its activation. In terms of processing, phosphorylation at Ser-30 and Ser-239 by PAK2 inhibits its activity. Phosphorylation at Ser-30 prevents cleavage and activation by initiator caspase CASP9, while phosphorylation at Ser-239 prevents thiol protease activity by preventing substrate-binding. (Microbial infection) ADP-riboxanation by C.violaceum CopC blocks CASP7 processing, preventing CASP7 activation and ability to recognize and cleave substrates. Post-translationally, ubiquitinated by BIRC6; this activity is inhibited by DIABLO/SMAC. Highly expressed in lung, skeletal muscle, liver, kidney, spleen and heart, and moderately in testis. No expression in the brain.

It localises to the cytoplasm. The protein resides in the cytosol. Its subcellular location is the nucleus. The protein localises to the secreted. It is found in the extracellular space. The catalysed reaction is Strict requirement for an Asp residue at position P1 and has a preferred cleavage sequence of Asp-Glu-Val-Asp-|-.. During activation, the N-terminal disordered prodomain is removed by cleavage. Concomitantly, double cleavage gives rise to a large Caspase-7 subunit p20 and a small Caspase-7 subunit p11. The two large and two small subunits then assemble to form the active CASP7 complex. Can be cleaved and activated by different caspases, depending on the context. Cleaved and activated by initiator caspases (CASP8, CASP9 and/or CASP10), leading to execution phase of apoptosis. Inhibited by XIAP, which directly binds to the active site pocket and obstructs substrate entry. Cleavage and maturation by GZMB regulates granzyme-mediated programmed cell death. Cleavage and maturation by CASP1 regulates pyroptosis. Phosphorylation at Ser-30 and Ser-239 by PAK2 inhibits its activity. Inhibited by isatin sulfonamides. Inhibited by 2-(2,4-Dichlorophenoxy)- N-(2-mercapto-ethyl)-acetamide (DICA) and 5-Fluoro-1H-indole-2- carboxylic acid (2-mercapto-ethyl)-amide (FICA) allosteric inhibitors, which disrupt an interaction between Arg-187 and Tyr-223. Specifically inhibited by DARPin D7.18 and D7.43, which specifically bind to the precursor CASP7 and prevent its processing and activation. Inhibited by BIRC6; following inhibition of BIRC6-caspase binding by DIABLO/SMAC, BIRC6 is subjected to caspase cleavage, leading to an increase in active caspases. In terms of biological role, thiol protease involved in different programmed cell death processes, such as apoptosis, pyroptosis or granzyme-mediated programmed cell death, by proteolytically cleaving target proteins. Has a marked preference for Asp-Glu-Val-Asp (DEVD) consensus sequences, with some plasticity for alternate non-canonical sequences. Its involvement in the different programmed cell death processes is probably determined by upstream proteases that activate CASP7. Acts as an effector caspase involved in the execution phase of apoptosis: following cleavage and activation by initiator caspases (CASP8, CASP9 and/or CASP10), mediates execution of apoptosis by catalyzing cleavage of proteins, such as CLSPN, PARP1, PTGES3 and YY1. Compared to CASP3, acts as a minor executioner caspase and cleaves a limited set of target proteins. Acts as a key regulator of the inflammatory response in response to bacterial infection by catalyzing cleavage and activation of the sphingomyelin phosphodiesterase SMPD1 in the extracellular milieu, thereby promoting membrane repair. Regulates pyroptosis in intestinal epithelial cells: cleaved and activated by CASP1 in response to S.typhimurium infection, promoting its secretion to the extracellular milieu, where it catalyzes activation of SMPD1, generating ceramides that repair membranes and counteract the action of gasdermin-D (GSDMD) pores. Regulates granzyme-mediated programmed cell death in hepatocytes: cleaved and activated by granzyme B (GZMB) in response to bacterial infection, promoting its secretion to the extracellular milieu, where it catalyzes activation of SMPD1, generating ceramides that repair membranes and counteract the action of perforin (PRF1) pores. Following cleavage by CASP1 in response to inflammasome activation, catalyzes processing and inactivation of PARP1, alleviating the transcription repressor activity of PARP1. Acts as an inhibitor of type I interferon production during virus-induced apoptosis by mediating cleavage of antiviral proteins CGAS, IRF3 and MAVS, thereby preventing cytokine overproduction. Cleaves and activates sterol regulatory element binding proteins (SREBPs). Cleaves phospholipid scramblase proteins XKR4, XKR8 and XKR9. In case of infection, catalyzes cleavage of Kaposi sarcoma-associated herpesvirus protein ORF57, thereby preventing expression of viral lytic genes. Cleaves BIRC6 following inhibition of BIRC6-caspase binding by DIABLO/SMAC. Lacks enzymatic activity. The sequence is that of Caspase-7 from Homo sapiens (Human).